The following is a 319-amino-acid chain: Vomeronasal type-1 receptor 96 (319 aa).

The Extracellular portion of the chain corresponds to 1 to 19 (MNKVNILPSDTNIKITLFS). Residues 20–40 (EVSVGISANSVLFFAHLCMFF) traverse the membrane as a helical segment. At 41–49 (EENRSKPID) the chain is on the cytoplasmic side. Residues 50-70 (LCIAFLSLTQLMLLVTMGLIA) traverse the membrane as a helical segment. Residues 71-93 (ADMFMSQGIWDSTTCRSIIYFHR) lie on the Extracellular side of the membrane. A disulfide bridge links C85 with C172. The chain crosses the membrane as a helical span at residues 94–114 (LLRGFNLCAACLLHILWTFTL). The Cytoplasmic portion of the chain corresponds to 115 to 134 (SPRSSCLTKFKHKSPHHISC). A helical membrane pass occupies residues 135–155 (AFFSLCVLYMLFSSHLFVLII). Topologically, residues 156 to 193 (ATSNLTSDHFMYVTQSCSILPMSYSRTTMFSLVMVTRE) are extracellular. An N-linked (GlcNAc...) asparagine glycan is attached at N159. Residues 194–214 (AFLISLMALFSGYMVTLLWRH) traverse the membrane as a helical segment. Residues 215 to 238 (KKQVQHLHSTSLSSKSSPQQRATR) lie on the Cytoplasmic side of the membrane. The chain crosses the membrane as a helical span at residues 239 to 259 (TILLLMSFFVVLYILDIVIFQ). Residues 260 to 269 (SRTKFKDGSM) lie on the Extracellular side of the membrane. Residues 270 to 290 (FYSLHIIVSHSYATISPFVFI) form a helical membrane-spanning segment. The Cytoplasmic portion of the chain corresponds to 291 to 319 (FSDKRIIKFLGSMSGRIINICLFSDGYGP).

This sequence belongs to the G-protein coupled receptor 1 family.

It is found in the cell membrane. Putative pheromone receptor implicated in the regulation of social as well as reproductive behavior. This Rattus norvegicus (Rat) protein is Vomeronasal type-1 receptor 96 (Vom1r96).